We begin with the raw amino-acid sequence, 1075 residues long: MLRNGNEGMSTIPGFSQIQFEGFCRFINQGLAEELEKFPTIKDPDHEIAFQLFAKGYQLLEPSIKERNAVYESLTYSSELYVSARLIFGFDVQKQTISIGNIPIMNSLGTFIINGIYRIVINQILLSPGIYYRSELDHKGISICTGTIISDWGGRSELAIDKKERIWARVSRKQKISILVLSSAMGSNLREILDNVSYPEIFLSFPNAKEKKRIESKEKAILEFYQQFACVGGDLVFSESLCEELQKKFFQQKCELGRVGRRNMNRRLNLDIPQNNTFLLPRDVLAATDHLIGMKFGTGILDDDDMNHLKNKRIRSVADLLQDQFGLALGRLQHAVQKTIRRVFIRQSKPTPQTLVTPTSTSILLITTYETFFGTYPLAQVFDQTNPLTQTVHGRKVSCLGPGGLTGRTASFRSRDIHPSHYGRICPIDTSEGINVGLTGSLAIHARIDHWWGSIESPFYEISEKAKEKKERQVVYLSPNRDEYYMIAAGNSLSLNQGIQEEQVVPARYRQEFLTIAWEQIHVRSIFPFQYFSIGGSLIPFIEHNDANRALMSSNMQRQAVPLSRSEKCIVGTGLERQTALDSRVSVIAEREGKIISSDSHKILLSSSGKTISIPLVAHRRSNKNTCMHQKPRVPRGKSIKKGQILAEGAATVGGELALGKNVLVAYMPWEGYNFEDAVLISERLVYEDIYTSFHIRKYEIQTDTTSQGSAEKITKQIPHLEEHLLRNLDRNGVVRLGSWVETGDILVGKLTPQIASESSYIAEAGLLRAIFGLEVSTSKETSLKLPIGGRGRVIDVKWIQRDPFDIMVRVYILQKREIKVGDKVAGRHGNKGIISKILPRQDMPYLQDGTPVDMVFNPLGVPSRMNVGQIFESSLGLAGDLLKKHYRIAPFDERYEQEASRKLVFSELYEASKQTKNPWVFEPEYPGKSRIFDGRTGDPFEQPVLIGKSYILKLIHQVDEKIHGRSTGPYSLVTQQPVRGRAKQGGQRIGEMEVWALEGFGVAHILQEILTYKSDHLIARQEILNATIWGKRVPNHEDPPESFRVLVRELRSLALELNHFLVSEKNFRVNREDV.

The protein belongs to the RNA polymerase beta chain family. In plastids the minimal PEP RNA polymerase catalytic core is composed of four subunits: alpha, beta, beta', and beta''. When a (nuclear-encoded) sigma factor is associated with the core the holoenzyme is formed, which can initiate transcription.

The protein localises to the plastid. The protein resides in the chloroplast. It catalyses the reaction RNA(n) + a ribonucleoside 5'-triphosphate = RNA(n+1) + diphosphate. Functionally, DNA-dependent RNA polymerase catalyzes the transcription of DNA into RNA using the four ribonucleoside triphosphates as substrates. The chain is DNA-directed RNA polymerase subunit beta from Saccharum officinarum (Sugarcane).